The primary structure comprises 190 residues: LOB domain-containing protein 1 (190 aa).

Residues 1-11 are compositionally biased toward polar residues; sequence MESKSDASVAT. The segment at 1–27 is disordered; that stretch reads MESKSDASVATTPIISSSSSPPPSLSP. An LOB domain is found at 32–133; sequence SPCAACKILR…AQLAKAQVEM (102 aa).

It belongs to the LOB domain-containing protein family. As to expression, expressed in young shoots, roots, stems, leaves and flowers.

In Arabidopsis thaliana (Mouse-ear cress), this protein is LOB domain-containing protein 1 (LBD1).